The following is a 189-amino-acid chain: Xanthine phosphoribosyltransferase (189 aa).

Xanthine-binding residues include Leu20 and Asn27. Ala128–Ala132 is a binding site for 5-phospho-alpha-D-ribose 1-diphosphate. Position 156 (Lys156) interacts with xanthine.

The protein belongs to the purine/pyrimidine phosphoribosyltransferase family. Xpt subfamily. As to quaternary structure, homodimer.

The protein localises to the cytoplasm. The catalysed reaction is XMP + diphosphate = xanthine + 5-phospho-alpha-D-ribose 1-diphosphate. The protein operates within purine metabolism; XMP biosynthesis via salvage pathway; XMP from xanthine: step 1/1. In terms of biological role, converts the preformed base xanthine, a product of nucleic acid breakdown, to xanthosine 5'-monophosphate (XMP), so it can be reused for RNA or DNA synthesis. This chain is Xanthine phosphoribosyltransferase, found in Lactobacillus delbrueckii subsp. bulgaricus (strain ATCC 11842 / DSM 20081 / BCRC 10696 / JCM 1002 / NBRC 13953 / NCIMB 11778 / NCTC 12712 / WDCM 00102 / Lb 14).